We begin with the raw amino-acid sequence, 94 residues long: Co-chaperonin GroES (94 aa).

Belongs to the GroES chaperonin family. Heptamer of 7 subunits arranged in a ring. Interacts with the chaperonin GroEL.

Its subcellular location is the cytoplasm. Together with the chaperonin GroEL, plays an essential role in assisting protein folding. The GroEL-GroES system forms a nano-cage that allows encapsulation of the non-native substrate proteins and provides a physical environment optimized to promote and accelerate protein folding. GroES binds to the apical surface of the GroEL ring, thereby capping the opening of the GroEL channel. The chain is Co-chaperonin GroES from Leuconostoc citreum (strain KM20).